The primary structure comprises 158 residues: Pathogenesis-related protein 2 (158 aa).

It belongs to the BetVI family.

This chain is Pathogenesis-related protein 2 (PR2), found in Petroselinum crispum (Parsley).